The following is a 163-amino-acid chain: Nucleotide-binding protein Ava_2001 (163 aa).

Belongs to the YajQ family.

Functionally, nucleotide-binding protein. The sequence is that of Nucleotide-binding protein Ava_2001 from Trichormus variabilis (strain ATCC 29413 / PCC 7937) (Anabaena variabilis).